The primary structure comprises 102 residues: Protein PDF (102 aa).

The N-terminal stretch at 1 to 24 is a signal peptide; that stretch reads MARYTYLVALVLLAICCQWGYCGA. Residue Ala100 is modified to Alanine amide.

This sequence belongs to the arthropod PDH family. As to expression, predominantly expressed in adult head. Expressed at higher level in males than in females. In adult brain, it is specifically expressed in the ventral lateral neurons (LNvs) as well as in 2-4 tritocerebral cells and 4-6 abdominal cells.

It localises to the secreted. In terms of biological role, neuropeptide PDF is the main transmitter regulating circadian locomotor rhythms. Required to maintain behavioral rhythms under constant conditions by coordinating pacemaker interactions in the circadian system. Together with CCHa1, involved in regulating intensity and periodicity of daytime activity, possibly by modulating rhythmic expression of circadian protein PER/period in a subset of clock neurons, but not TIM/timeless. Acts on small and large ventral lateral neurons to control sleep and regulates the state transition from sleep to wake. This chain is Protein PDF (Pdf), found in Drosophila melanogaster (Fruit fly).